The following is a 299-amino-acid chain: Virginiamycin B lyase (299 aa).

Histidine 229 is a binding site for substrate. Glutamate 269 is a binding site for Mg(2+). Histidine 271 (proton acceptor) is an active-site residue. Residue glutamate 286 participates in Mg(2+) binding.

Belongs to the Vgb family. Monomer. The cofactor is Mg(2+).

In terms of biological role, inactivates the type B streptogramin antibiotics by linearizing the lactone ring at the ester linkage, generating a free phenylglycine carboxylate and converting the threonyl moiety into 2-amino-butenoic acid. The chain is Virginiamycin B lyase (vgb) from Bordetella pertussis (strain Tohama I / ATCC BAA-589 / NCTC 13251).